The following is a 1227-amino-acid chain: MAAVLESLLREEVSVAAVVRWIARSTQGSEDNAGEAAALSSLRALRKEFVPFLLNFLREQSSRVLPQGPPTPAKTPGASAALPGRPGGPPRGSRGARSQLFPPTEAQSTAAEAPLARRGGRRRGPGPARERGGRGLEEGVSGESLPGAGGRRLRGSGSPSRPSLTLSDPPNLSNLEEFPPVGSVPPGPTGTKPSRRINPTPVSEERSLSKPKTCFTSPPISCVPSSQPSALDTSPWGLGLPPGCRSLQEEREMLRKERSKQLQQSPTPTCPTPELGSPLPSRTGSLTDEPADPARVSSRQRLELVALVYSSCIAENLVPNLFLELFFVFQLLTARRMVTAKDSDPELSPAVLDSLESPLFQSIHDCVFFAVQVLECHFQVLSNLDKGTLKLLAENERLLCFSPALQGRLRAAYEGSVAKVSLVMPPSTQAVSFQPETDNRANFSSDRAFHTFKKQRDVFYEVLREWEDHHEEPGWDFEKGLGSRIRAMMGQLSAACSHSHFVRLFQKQLLQMCQSPGGAGGTVLGEAPDVLSMLGADKLGRLWRLQERLMAPQSSGGPCPPPTFPGCQGFFRDFILSASSFQFNQHLMDSLSLKIQELNGLALPQHEPNDEDGESDVDWQGERKQFAVVLLSLRLLAKFLGFVAFLPYRGPEPPPTGELQDSILALRSQVPPVLDVRTLLQRGLQARRAVLTVPWLVEFLSFADHVVPLLEYYRDIFTLLLRLHRSLVLSQESEGKMCFLNKLLLLAVLGWLFQIPTVPEDLFFLEEGPSYAFEVDTVAPEHGLDNAPVVDQQLLYTCCPYIGELRKLLASWVSGSSGRSGGFMRKITPTTTTSLGAQPSQTSQGLQAQLAQAFFHNQPPSLRRTVEFVAERIGSNCVKHIKATLVADLVRQAESLLQEQLVTQGEEGGDPAQLLEILCSQLCPHGAQALALGREFCQRKSPGAVRALLPEETPAAVLSSAENIAVGLATEKACAWLSANITALIRREVKAAVSRTLRAQGPEPAARGERRGCSRACEHHAPLPSHLISEIKDVLSLAVGPRDPDEGVSPEHLEQLLGQLGQTLRCRQFLCPPAEQHLAKCSVELASLLVADQIPILGPPAQYRLERGQARRLLHMLLSLWKEDFQGPVPLQLLLSPRNVGLLADTRPREWDLLLFLLRELVEKGLMGRMEIEACLGSLHQAQWPGDFAEELATLSNLFLAEPHLPEPQLRACELVQPNRGTVLAQS.

Residue A2 is modified to N-acetylalanine. The tract at residues R63–A294 is disordered. At T71 the chain carries Phosphothreonine. Residues A128–E137 are compositionally biased toward basic and acidic residues. Over residues G155–S167 the composition is skewed to low complexity. The interval P188–L208 is interaction with ASF1A/B. Polar residues predominate over residues C214–D232. Basic and acidic residues predominate over residues L247–K260. Residues S265 and S285 each carry the phosphoserine modification. A run of 2 helical transmembrane segments spans residues C312–L332 and F626–L646.

As to quaternary structure, found in a cytosolic complex with ASF1A, ASF1B, IPO4 and histones H3.1 and H4. Ubiquitously expressed. Isoform 3 is not found in erythroid cells.

The protein resides in the cytoplasm. The protein localises to the nucleus. Its subcellular location is the membrane. May act as a negative regulator of ASF1 in chromatin assembly. This is Codanin-1 (CDAN1) from Homo sapiens (Human).